A 195-amino-acid polypeptide reads, in one-letter code: Imidazoleglycerol-phosphate dehydratase (195 aa).

It belongs to the imidazoleglycerol-phosphate dehydratase family.

It is found in the cytoplasm. The enzyme catalyses D-erythro-1-(imidazol-4-yl)glycerol 3-phosphate = 3-(imidazol-4-yl)-2-oxopropyl phosphate + H2O. The protein operates within amino-acid biosynthesis; L-histidine biosynthesis; L-histidine from 5-phospho-alpha-D-ribose 1-diphosphate: step 6/9. This chain is Imidazoleglycerol-phosphate dehydratase, found in Alkaliphilus metalliredigens (strain QYMF).